Reading from the N-terminus, the 393-residue chain is NAD(P)H-quinone oxidoreductase subunit H, chloroplastic (393 aa).

This sequence belongs to the complex I 49 kDa subunit family. As to quaternary structure, NDH is composed of at least 16 different subunits, 5 of which are encoded in the nucleus.

It is found in the plastid. The protein resides in the chloroplast thylakoid membrane. The catalysed reaction is a plastoquinone + NADH + (n+1) H(+)(in) = a plastoquinol + NAD(+) + n H(+)(out). The enzyme catalyses a plastoquinone + NADPH + (n+1) H(+)(in) = a plastoquinol + NADP(+) + n H(+)(out). Its function is as follows. NDH shuttles electrons from NAD(P)H:plastoquinone, via FMN and iron-sulfur (Fe-S) centers, to quinones in the photosynthetic chain and possibly in a chloroplast respiratory chain. The immediate electron acceptor for the enzyme in this species is believed to be plastoquinone. Couples the redox reaction to proton translocation, and thus conserves the redox energy in a proton gradient. This chain is NAD(P)H-quinone oxidoreductase subunit H, chloroplastic, found in Spinacia oleracea (Spinach).